The sequence spans 344 residues: Phenylalanine--tRNA ligase alpha subunit (344 aa).

Glu-256 provides a ligand contact to Mg(2+).

It belongs to the class-II aminoacyl-tRNA synthetase family. Phe-tRNA synthetase alpha subunit type 1 subfamily. As to quaternary structure, tetramer of two alpha and two beta subunits. The cofactor is Mg(2+).

It is found in the cytoplasm. The enzyme catalyses tRNA(Phe) + L-phenylalanine + ATP = L-phenylalanyl-tRNA(Phe) + AMP + diphosphate + H(+). The polypeptide is Phenylalanine--tRNA ligase alpha subunit (Bacillus licheniformis (strain ATCC 14580 / DSM 13 / JCM 2505 / CCUG 7422 / NBRC 12200 / NCIMB 9375 / NCTC 10341 / NRRL NRS-1264 / Gibson 46)).